The following is a 273-amino-acid chain: Large ribosomal subunit protein uL2 (273 aa).

Disordered regions lie at residues 28–54 (KPYAPLLEKNSKSGGRNNNGRITTRHI) and 221–273 (RGTA…RRTK). Low complexity predominate over residues 39-48 (KSGGRNNNGR).

The protein belongs to the universal ribosomal protein uL2 family. In terms of assembly, part of the 50S ribosomal subunit. Forms a bridge to the 30S subunit in the 70S ribosome.

One of the primary rRNA binding proteins. Required for association of the 30S and 50S subunits to form the 70S ribosome, for tRNA binding and peptide bond formation. It has been suggested to have peptidyltransferase activity; this is somewhat controversial. Makes several contacts with the 16S rRNA in the 70S ribosome. In Pectobacterium carotovorum subsp. carotovorum (strain PC1), this protein is Large ribosomal subunit protein uL2.